A 201-amino-acid polypeptide reads, in one-letter code: Small ribosomal subunit protein uS4 (201 aa).

The 61-residue stretch at 91–151 (ARLDNVIYRA…DRSRSMLWFD (61 aa)) folds into the S4 RNA-binding domain.

Belongs to the universal ribosomal protein uS4 family. In terms of assembly, part of the 30S ribosomal subunit. Contacts protein S5. The interaction surface between S4 and S5 is involved in control of translational fidelity.

Its function is as follows. One of the primary rRNA binding proteins, it binds directly to 16S rRNA where it nucleates assembly of the body of the 30S subunit. Functionally, with S5 and S12 plays an important role in translational accuracy. The protein is Small ribosomal subunit protein uS4 of Corynebacterium urealyticum (strain ATCC 43042 / DSM 7109).